The sequence spans 943 residues: Centromere protein C (943 aa).

Lys-45 participates in a covalent cross-link: Glycyl lysine isopeptide (Lys-Gly) (interchain with G-Cter in SUMO2). Positions 70–91 (CIQSPSKECQKSHPKSVPVSSK) are disordered. Phosphoserine is present on residues Ser-73 and Ser-96. Lys-119 is covalently cross-linked (Glycyl lysine isopeptide (Lys-Gly) (interchain with G-Cter in SUMO2)). At Thr-130 the chain carries Phosphothreonine. Residue Lys-134 forms a Glycyl lysine isopeptide (Lys-Gly) (interchain with G-Cter in SUMO2) linkage. Ser-146 bears the Phosphoserine mark. Lys-180 participates in a covalent cross-link: Glycyl lysine isopeptide (Lys-Gly) (interchain with G-Cter in SUMO2). The residue at position 183 (Thr-183) is a Phosphothreonine. Phosphoserine is present on Ser-189. Glycyl lysine isopeptide (Lys-Gly) (interchain with G-Cter in SUMO2) cross-links involve residues Lys-212 and Lys-217. Basic and acidic residues predominate over residues 224–239 (VSDEEDKTSEGQERKP). Positions 224–250 (VSDEEDKTSEGQERKPSGSSQNRIRDS) are disordered. Phosphoserine is present on Ser-225. Residues Lys-238 and Lys-260 each participate in a glycyl lysine isopeptide (Lys-Gly) (interchain with G-Cter in SUMO2) cross-link. Positions 259 to 273 (KKSFSTLFLETVKRK) match the Nuclear localization signal motif. Ser-261 carries the phosphoserine modification. Residues Lys-271, Lys-273, and Lys-297 each participate in a glycyl lysine isopeptide (Lys-Gly) (interchain with G-Cter in SUMO2) cross-link. A phosphoserine mark is found at Ser-316, Ser-333, Ser-376, and Ser-397. The tract at residues 358–377 (LANDKHSHKPHPVETSQPSD) is disordered. A disordered region spans residues 403-513 (YSKNAEKPSR…SKNKLVPEEV (111 aa)). The segment covering 412 to 426 (RSKRTIKQKQRRKFM) has biased composition (basic residues). 2 stretches are compositionally biased toward basic and acidic residues: residues 438 to 463 (QSKDENIHTSHITQDEFQRNSDRNME) and 488 to 510 (TRKDKEESKKKRFSSESKNKLVP). Phosphoserine is present on Ser-439. Lys-440 participates in a covalent cross-link: Glycyl lysine isopeptide (Lys-Gly) (interchain with G-Cter in SUMO2). Residues 484 to 499 (KKSSTRKDKEESKKKR) carry the Nuclear localization signal motif. Ser-528 carries the post-translational modification Phosphoserine. Lys-534 is covalently cross-linked (Glycyl lysine isopeptide (Lys-Gly) (interchain with G-Cter in SUMO2)). Disordered stretches follow at residues 537–587 (ESPV…ATKG) and 632–717 (DCSR…KQSK). At Ser-538 the chain carries Phosphoserine. Residues 558-574 (RKSTKKTNQSSKNIRKK) carry the Nuclear localization signal motif. Positions 570 to 583 (NIRKKTIPLKRQKT) are enriched in basic residues. A compositionally biased stretch (polar residues) spans 633 to 672 (CSRSTRSSKNEDNIMTAQNVPLKPQTSGYTCNIPTESNLD). Lys-677 is covalently cross-linked (Glycyl lysine isopeptide (Lys-Gly) (interchain with G-Cter in SUMO2)). A phosphoserine mark is found at Ser-684, Ser-709, and Ser-710. Residues 706–715 (VHGSSDDSKQ) show a composition bias toward basic and acidic residues. Residue Lys-727 forms a Glycyl lysine isopeptide (Lys-Gly) (interchain with G-Cter in SUMO2) linkage. Phosphothreonine is present on Thr-734. The tract at residues 737-759 (VRRTKRTRLKPLEYWRGERIDYQ) is MIF2 homology domain II. A phosphoserine mark is found at Ser-763 and Ser-773. The Nuclear localization signal signature appears at 780-798 (KRKAKENIGKVNKKSNKKR). Residue Lys-807 forms a Glycyl lysine isopeptide (Lys-Gly) (interchain with G-Cter in SUMO2) linkage. Positions 890 to 943 (LVFYVNFGDLLCTLHETPYILSTGDSFYVPSGNYYNIKNLRNEESVLLFTQIKR) are MIF2 homology domain III.

Belongs to the CENP-C/MIF2 family. As to quaternary structure, oligomer. Component of the CENPA-NAC complex, at least composed of CENPA, CENPC, CENPH, CENPM, CENPN, CENPT and CENPU. The CENPA-NAC complex interacts with the CENPA-CAD complex, composed of CENPI, CENPK, CENPL, CENPO, CENPP, CENPQ, CENPR and CENPS. Binds to DAXX. Interacts with DNMT3B. Interacts directly with CENPA. Identified in a centromere complex containing histones H2A, H2B and H4, and at least CENPA, CENPB, CENPC, CENPT, CENPN, HJURP, SUPT16H, SSRP1 and RSF1. Interacts with MEIKIN.

The protein localises to the nucleus. It is found in the chromosome. The protein resides in the centromere. It localises to the kinetochore. In terms of biological role, component of the CENPA-NAC (nucleosome-associated) complex, a complex that plays a central role in assembly of kinetochore proteins, mitotic progression and chromosome segregation. The CENPA-NAC complex recruits the CENPA-CAD (nucleosome distal) complex and may be involved in incorporation of newly synthesized CENPA into centromeres. CENPC recruits DNA methylation and DNMT3B to both centromeric and pericentromeric satellite repeats and regulates the histone code in these regions. This is Centromere protein C (CENPC) from Homo sapiens (Human).